Here is a 587-residue protein sequence, read N- to C-terminus: Arginine--tRNA ligase (587 aa).

The short motif at 127-137 (PNLAKEMHVGH) is the 'HIGH' region element.

The protein belongs to the class-I aminoacyl-tRNA synthetase family. As to quaternary structure, monomer.

The protein resides in the cytoplasm. It carries out the reaction tRNA(Arg) + L-arginine + ATP = L-arginyl-tRNA(Arg) + AMP + diphosphate. This is Arginine--tRNA ligase from Pseudomonas aeruginosa (strain ATCC 15692 / DSM 22644 / CIP 104116 / JCM 14847 / LMG 12228 / 1C / PRS 101 / PAO1).